The following is a 504-amino-acid chain: Pyrichalasin C-7 hydroxylase (504 aa).

Positions 1 to 17 (MLNSAACIVLAITAVLG) are cleaved as a signal peptide. Residue cysteine 449 participates in heme binding.

The protein belongs to the cytochrome P450 family. The cofactor is heme.

It functions in the pathway mycotoxin biosynthesis. Cytochrome P450 monooxygenase; part of the gene cluster that mediates the biosynthesis of the mycotoxin pyrichalasin H, a tyrosine-derived cytochalasan that inhibits the growth of rice seedlings, but also inhibits lymphocyte capping and actin polymerization and alters cell morphology. Pyrichalasin H is indicated as the responsible agent for the genus-specific pathogenicity of M.grisea toward crabgrass. The first step in the pathway is catalyzed by the O-methyltransferase pyiA which methylates free tyrosine to generate the precursor O-methyltyrosine. The hybrid PKS-NRPS pyiS, assisted by the enoyl reductase pyiC, are responsible for fusion of the O-methyltyrosine precursor and the polyketide backbone. The polyketide synthase module (PKS) of pyiS is responsible for the synthesis of the polyketide backbone and the downstream nonribosomal peptide synthetase (NRPS) amidates the carboxyl end of the polyketide with the O-methyltyrosine precursor. As the NRPS A-domain demonstrates substrate tolerance, pyiS can also use phenylalanine, tyrosine and even para-chlorophenylalanine as amino acid precursor, which leads to the production of novel cytochalasans, including halogenated cytochalasans. Because pyiS lacks a designated enoylreductase (ER) domain, the required activity is provided the enoyl reductase pyiC. Reduction by the hydrolyase pyiE leads to 1,5-dihydropyrrolone, which is substrate for dehydration and intra-molecular Diels-Alder cyclization by the Diels-Alderase pyiF to yield the required isoindolone-fused macrocycle. The tailoring cytochrome P450 monooxygenases piyD and piyG catalyze the hydroxylation at C-18 and C-7, respectivily, whereas the short-chain dehydrogenase/reductase pyiH reduces the carbonyl at C-21 in preparation for the transfer of an acetyl group by the acetyltransferase pyiB. These 3 reactions whose order is not clear yet, lead to the production of O-methylpyrichalasin J, a deacetylated pyrichalasin H. Finally, pyiB to converts O-methylpyrichalasin J into the final product pyrichalasin H via acetylation of C-21. In Pyricularia grisea (Crabgrass-specific blast fungus), this protein is Pyrichalasin C-7 hydroxylase.